Here is a 429-residue protein sequence, read N- to C-terminus: E3 ubiquitin-protein ligase ZNRF4 (429 aa).

The signal sequence occupies residues 1 to 27 (MLRCRPEPLMPRATRVAVAVSLPLSHA). Over 28 to 250 (VIPTQLPSHP…PPCRDLDCHP (223 aa)) the chain is Lumenal. The segment at 30–64 (PTQLPSHPGHRPSGRPRRCPKAPCLPSPVGLSSTQ) is disordered. Residues 37-49 (PGHRPSGRPRRCP) show a composition bias toward basic residues. The N-linked (GlcNAc...) asparagine glycan is linked to Asn152. A PA domain is found at 152 to 223 (NRSLGAIALI…VGEAASQDLR (72 aa)). The helical transmembrane segment at 251–271 (VLTVSWALGRTLALVVSTLFV) threads the bilayer. Residues 272–429 (LNRLWLWAQA…SPAPPEAPGQ (158 aa)) lie on the Cytoplasmic side of the membrane. The RING-type; atypical zinc-finger motif lies at 309–352 (CAICLDEYEEGDQLKILPCSHTYHCKCIDPWFSQAPRRSCPVCK). Disordered stretches follow at residues 358–381 (TEDSFDSTTDSFSDEDPSLPGHRP) and 409–429 (TTSLEAEDTTVSPAPPEAPGQ). Residues 409–420 (TTSLEAEDTTVS) are compositionally biased toward polar residues.

As to quaternary structure, interacts with CANX.

The protein resides in the endoplasmic reticulum membrane. It carries out the reaction S-ubiquitinyl-[E2 ubiquitin-conjugating enzyme]-L-cysteine + [acceptor protein]-L-lysine = [E2 ubiquitin-conjugating enzyme]-L-cysteine + N(6)-ubiquitinyl-[acceptor protein]-L-lysine.. It participates in protein modification; protein ubiquitination. Its function is as follows. E3 ubiquitin-protein ligase that acts as a negative regulator of NOD2 signaling by mediating ubiquitination and degradation of RIPK2. Also catalyzes ubiquitination and proteasomal degradation of CANX within the endoplasmic reticulum. Could have a role in spermatogenesis. This is E3 ubiquitin-protein ligase ZNRF4 (ZNRF4) from Macaca fascicularis (Crab-eating macaque).